We begin with the raw amino-acid sequence, 633 residues long: uncharacterized protein (633 aa).

This is an uncharacterized protein from Archaeoglobus fulgidus (strain ATCC 49558 / DSM 4304 / JCM 9628 / NBRC 100126 / VC-16).